Reading from the N-terminus, the 545-residue chain is T-complex protein 1 subunit gamma (545 aa).

Met1 carries the post-translational modification N-acetylmethionine. The disordered stretch occupies residues 1-24; that stretch reads MMGHRPVLVLSQNTKRESGRKVQS. Ser11 carries the post-translational modification Phosphoserine. Lys15 participates in a covalent cross-link: Glycyl lysine isopeptide (Lys-Gly) (interchain with G-Cter in SUMO2). Gly42 contacts ADP. Position 42 (Gly42) interacts with ATP. Mg(2+) is bound at residue Asp93. Positions 94, 95, 96, 97, 162, and 163 each coordinate ADP. ATP-binding residues include Gly94, Thr95, and Thr96. Residue Ser170 is modified to Phosphoserine. Lys222 is subject to N6-acetyllysine. Residues Ser243 and Ser244 each carry the phosphoserine modification. Position 247 is a phosphotyrosine (Tyr247). Glycyl lysine isopeptide (Lys-Gly) (interchain with G-Cter in SUMO2) cross-links involve residues Lys248 and Lys249. Residue Ser252 is modified to Phosphoserine. Cys366 and Cys372 are disulfide-bonded. Residue Lys381 forms a Glycyl lysine isopeptide (Lys-Gly) (interchain with G-Cter in SUMO2) linkage. Gly411 lines the ADP pocket. An ATP-binding site is contributed by Gly411. Residues Thr430 and Thr459 each carry the phosphothreonine modification. Gly482, Glu483, Glu497, and Lys502 together coordinate ADP. Gly482 provides a ligand contact to ATP. Glu497 contributes to the ATP binding site. The disordered stretch occupies residues 526–545; that stretch reads HKKKGDDQSRQGGAPDAGQE.

Belongs to the TCP-1 chaperonin family. In terms of assembly, component of the chaperonin-containing T-complex (TRiC), a hexadecamer composed of two identical back-to-back stacked rings enclosing a protein folding chamber. Each ring is made up of eight different subunits: TCP1/CCT1, CCT2, CCT3, CCT4, CCT5, CCT6A/CCT6, CCT7, CCT8. Interacts with PACRG. Interacts with DNAAF4. Interacts with DLEC1.

It is found in the cytoplasm. It catalyses the reaction ATP + H2O = ADP + phosphate + H(+). In terms of biological role, component of the chaperonin-containing T-complex (TRiC), a molecular chaperone complex that assists the folding of actin, tubulin and other proteins upon ATP hydrolysis. The TRiC complex mediates the folding of WRAP53/TCAB1, thereby regulating telomere maintenance. As part of the TRiC complex may play a role in the assembly of BBSome, a complex involved in ciliogenesis regulating transports vesicles to the cilia. The sequence is that of T-complex protein 1 subunit gamma (CCT3) from Pongo abelii (Sumatran orangutan).